We begin with the raw amino-acid sequence, 55 residues long: Large ribosomal subunit protein bL32c (55 aa).

The disordered stretch occupies residues 1-24; the sequence is MAVPKKRTSKSKKNARKANWKRKG.

Belongs to the bacterial ribosomal protein bL32 family.

Its subcellular location is the plastid. It localises to the chloroplast. In Phaeodactylum tricornutum (strain CCAP 1055/1), this protein is Large ribosomal subunit protein bL32c.